Here is a 207-residue protein sequence, read N- to C-terminus: Putative 3-methyladenine DNA glycosylase (207 aa).

It belongs to the DNA glycosylase MPG family.

This is Putative 3-methyladenine DNA glycosylase from Listeria monocytogenes serotype 4a (strain HCC23).